A 117-amino-acid polypeptide reads, in one-letter code: Large ribosomal subunit protein uL23 (117 aa).

It belongs to the universal ribosomal protein uL23 family. In terms of assembly, part of the 50S ribosomal subunit. Contacts protein L29, and trigger factor when it is bound to the ribosome.

In terms of biological role, one of the early assembly proteins it binds 23S rRNA. One of the proteins that surrounds the polypeptide exit tunnel on the outside of the ribosome. Forms the main docking site for trigger factor binding to the ribosome. The protein is Large ribosomal subunit protein uL23 of Acetivibrio thermocellus (strain ATCC 27405 / DSM 1237 / JCM 9322 / NBRC 103400 / NCIMB 10682 / NRRL B-4536 / VPI 7372) (Clostridium thermocellum).